We begin with the raw amino-acid sequence, 164 residues long: Transcription elongation factor GreA (164 aa).

The protein belongs to the GreA/GreB family.

Its function is as follows. Necessary for efficient RNA polymerase transcription elongation past template-encoded arresting sites. The arresting sites in DNA have the property of trapping a certain fraction of elongating RNA polymerases that pass through, resulting in locked ternary complexes. Cleavage of the nascent transcript by cleavage factors such as GreA or GreB allows the resumption of elongation from the new 3'terminus. GreA releases sequences of 2 to 3 nucleotides. The sequence is that of Transcription elongation factor GreA from Helicobacter acinonychis (strain Sheeba).